A 539-amino-acid chain; its full sequence is GMP synthase [glutamine-hydrolyzing] (539 aa).

Residues 4 to 202 (KILILDFGSQ…VLQIAGAKPD (199 aa)) form the Glutamine amidotransferase type-1 domain. C81 (nucleophile) is an active-site residue. Residues H176 and E178 contribute to the active site. The GMPS ATP-PPase domain occupies 203-395 (WIMKNHIEEA…LGLPPEMVYR (193 aa)). Residue 230–236 (SGGVDSS) participates in ATP binding.

As to quaternary structure, homodimer.

The enzyme catalyses XMP + L-glutamine + ATP + H2O = GMP + L-glutamate + AMP + diphosphate + 2 H(+). The protein operates within purine metabolism; GMP biosynthesis; GMP from XMP (L-Gln route): step 1/1. Its function is as follows. Catalyzes the synthesis of GMP from XMP. This is GMP synthase [glutamine-hydrolyzing] from Burkholderia cenocepacia (strain ATCC BAA-245 / DSM 16553 / LMG 16656 / NCTC 13227 / J2315 / CF5610) (Burkholderia cepacia (strain J2315)).